A 257-amino-acid chain; its full sequence is Flagellar brake protein YcgR 2 (257 aa).

The 114-residue stretch at 131–244 folds into the PilZ domain; it reads QRREFFRVQT…AERTLQRVVT (114 aa).

Belongs to the YcgR family. In terms of assembly, monomer. Interacts with the flagellar basal bodies.

The protein localises to the bacterial flagellum basal body. Functionally, acts as a flagellar brake, regulating swimming and swarming in a bis-(3'-5') cyclic diguanylic acid (c-di-GMP)-dependent manner. Binds 1 c-di-GMP dimer per subunit. Increasing levels of c-di-GMP lead to decreased motility. In Paraburkholderia phytofirmans (strain DSM 17436 / LMG 22146 / PsJN) (Burkholderia phytofirmans), this protein is Flagellar brake protein YcgR 2.